The sequence spans 233 residues: Superoxide dismutase [Mn], mitochondrial (233 aa).

The transit peptide at 1–27 directs the protein to the mitochondrion; it reads MALRSLVTRKNLPSAFKAATGLGQLRG. Mn(2+) contacts are provided by H55, H103, D192, and H196.

It belongs to the iron/manganese superoxide dismutase family. As to quaternary structure, homotetramer. It depends on Mn(2+) as a cofactor. Present in all tissues examined (leaf, petiole, root, latex, callus) with young leaves showing the highest levels in intact plants.

The protein localises to the mitochondrion matrix. It carries out the reaction 2 superoxide + 2 H(+) = H2O2 + O2. Its function is as follows. Destroys superoxide anion radicals which are normally produced within the cells and which are toxic to biological systems. The polypeptide is Superoxide dismutase [Mn], mitochondrial (SODA) (Hevea brasiliensis (Para rubber tree)).